A 624-amino-acid chain; its full sequence is Probable potassium transport system protein Kup 1 (624 aa).

12 consecutive transmembrane segments (helical) span residues 10-30 (LALG…LYAL), 48-68 (LSLI…MIIF), 94-114 (PVFY…GMLT), 133-153 (LYPY…SLQA), 159-179 (IGYL…ILGI), 210-230 (FLLG…ADIG), 242-262 (FFIA…NLIV), 270-290 (PFFM…ATVA), 331-351 (IYVP…CLAF), 363-383 (IAVN…AVSI), 388-408 (TFNV…FLGA), and 413-433 (FITG…IMYS).

This sequence belongs to the HAK/KUP transporter (TC 2.A.72) family.

The protein localises to the cell inner membrane. It catalyses the reaction K(+)(in) + H(+)(in) = K(+)(out) + H(+)(out). Functionally, transport of potassium into the cell. Likely operates as a K(+):H(+) symporter. This is Probable potassium transport system protein Kup 1 from Legionella pneumophila (strain Paris).